The chain runs to 2647 residues: Filamin-A (2647 aa).

The segment at 1-37 (MSSSHSRCGQSAAVASPGGSIDSRDAEMPATEKDLAE) is disordered. Ser-2 is subject to N-acetylserine. The segment at 2–274 (SSSHSRCGQS…PKAKLKPGAP (273 aa)) is actin-binding. Residues Ser-11, Ser-16, and Ser-20 each carry the phosphoserine modification. Positions 22-37 (DSRDAEMPATEKDLAE) are enriched in basic and acidic residues. Residues Lys-42, Lys-43, and Lys-135 each participate in a glycyl lysine isopeptide (Lys-Gly) (interchain with G-Cter in ubiquitin) cross-link. Calponin-homology (CH) domains are found at residues 43 to 149 (KIQQ…LHYS) and 166 to 269 (QTPK…KAKL). The disordered stretch occupies residues 271–294 (PGAPLRPKLNPKKARAYGPGIEPT). Filamin repeat units lie at residues 276–374 (RPKL…EVYV), 376–474 (KSQG…TVTV), 475–570 (GQAC…EVKV), 571–663 (GTEC…MADI), 667–763 (PQDF…RVNV), 764–866 (GAGS…RVKV), 867–965 (EPSH…SVGV), 966–1061 (SPSL…PLEA), 1062–1154 (VAPT…KAHV), 1155–1249 (APCF…KLQV), 1250–1349 (EPAV…QVPV), 1350–1442 (TEGC…KVPV), 1443–1539 (HDVT…KVKV), 1540–1636 (LPTH…RVRA), and 1641–1740 (DASK…QVTA). A Glycyl lysine isopeptide (Lys-Gly) (interchain with G-Cter in SUMO1); alternate cross-link involves residue Lys-299. Lys-299 is covalently cross-linked (Glycyl lysine isopeptide (Lys-Gly) (interchain with G-Cter in SUMO2); alternate). Residues Lys-376 and Lys-508 each carry the N6-acetyllysine modification. Lys-700, Lys-781, Lys-837, Lys-865, and Lys-906 each carry N6-acetyllysine. A phosphoserine mark is found at Ser-968 and Ser-1055. At Lys-1071 the chain carries N6-acetyllysine; alternate. N6-succinyllysine; alternate is present on Lys-1071. At Ser-1084 the chain carries Phosphoserine. A Phosphothreonine modification is found at Thr-1089. Phosphoserine is present on residues Ser-1301 and Ser-1338. Lys-1372 is subject to N6-acetyllysine. Phosphoserine is present on residues Ser-1459 and Ser-1533. The segment at 1490–1607 (PKGLVEPVDV…DNHDGTYTVA (118 aa)) is interaction with furin. Position 1538 is an N6-acetyllysine (Lys-1538). Ser-1630 and Ser-1734 each carry phosphoserine. A hinge 1 region spans residues 1741–1778 (LAGDQPTVQTPLRSQQLAPQYNYPQGSQQTWIPERPMV). Thr-1750 carries the post-translational modification Phosphothreonine. 8 Filamin repeats span residues 1765-1860 (QGSQ…QFYV), 1861-1952 (DYVN…TARV), 1953-2039 (TGDD…PVVI), 2042-2134 (SEIG…SVKV), 2135-2230 (TGEG…QFTV), 2233-2325 (LGEG…VVPV), 2327-2420 (SPSG…KIRV), and 2424-2516 (GHGG…KAKV). Ser-1835 carries the post-translational modification Phosphoserine. Phosphoserine occurs at positions 1967, 2053, 2128, 2152, 2158, 2163, 2180, 2284, 2327, and 2329. Thr-2336 is modified (phosphothreonine). A phosphoserine mark is found at Ser-2338, Ser-2370, Ser-2414, Ser-2510, Ser-2523, and Ser-2526. The tract at residues 2517–2553 (TGPRLVSNHSLHETSSVFVDSLTKVATVPQHATSGPG) is hinge 2. A self-association site, tail region spans residues 2517–2647 (TGPRLVSNHS…PGSPYRIMVP (131 aa)). Residues 2552–2646 (PGPADVSKVV…IPGSPYRIMV (95 aa)) form a Filamin 24 repeat. The residue at position 2569 (Lys-2569) is an N6-acetyllysine; alternate. Lys-2569 carries the post-translational modification N6-succinyllysine; alternate. Lys-2575 is subject to N6-acetyllysine. At Thr-2599 the chain carries Phosphothreonine. Residues Lys-2607 and Lys-2621 each carry the N6-acetyllysine modification.

It belongs to the filamin family. In terms of assembly, homodimer. Interacts with FCGR1A, FLNB, FURIN, HSPB7, KCND2, INPPL1, MYOT, MYOZ1, PDLIM2, ARHGAP24, PSEN1, PSEN2 and ECSCR. Also interacts with various other binding partners in addition to filamentous actin. Interacts (via N-terminus) with TAF1B. Interacts (via N-terminus) with MIS18BP1 (via N-terminus). Interacts with TMEM67 (via C-terminus) and MKS1. Interacts (via actin-binding domain) with MICALL2 (via calponin-homology (CH) domain). Interacts with RFLNA and RFLNB. Interacts (via filamin repeat 5) with SYK; docks SYK to the plasma membrane. Interacts (via filamin repeats 19 and 21) with DRD3; increased PKA-mediated phosphorylation at Ser-2152. Interacts (via filamin repeat 21) with MAS1, AGTR1 and ADRA1D; increases PKA-mediated phosphorylation of FLNA at Ser-2152. Interacts (via filamin repeats 4, 9, 12, 17, 19, 21, and 23) with GP1BA (high affinity), ITGB7, ITGB2 and FBLIM1. Interacts with CEACAM1 (via cytoplasmic domain); inhibits cell migration and cell scattering by interfering with the interaction between FLNA and RALA. Interacts with FOXC1. Interacts (via calponin-homology (CH) domain 1 and filamin repeat 24) with CRMP1; the interaction alters FLNA ternary structure and thus promotes FLNA dissociation from F-actin. Interacts with DPYSL3/CRMP3 and DPYSL4/CRMP4. Phosphorylation at Ser-2152 is negatively regulated by the autoinhibited conformation of filamin repeats 19-21. Ligand binding induces a conformational switch triggering phosphorylation at Ser-2152 by PKA. In terms of processing, polyubiquitination in the CH1 domain by a SCF-like complex containing ASB2 leads to proteasomal degradation. Prior dissociation from actin may be required to expose the target lysines. Ubiquitinated in endothelial cells by RNF213 downstream of the non-canonical Wnt signaling pathway, leading to its degradation by the proteasome. In terms of tissue distribution, widely expressed. Highly expressed in Purkinje cells.

The protein localises to the cytoplasm. It localises to the cell cortex. Its subcellular location is the cytoskeleton. It is found in the perikaryon. The protein resides in the cell projection. The protein localises to the growth cone. It localises to the podosome. Actin binding protein that promotes orthogonal branching of actin filaments and links actin filaments to membrane glycoproteins. Anchors various transmembrane proteins to the actin cytoskeleton and serves as a scaffold for a wide range of cytoplasmic signaling proteins. Interaction with FLNB may allow neuroblast migration from the ventricular zone into the cortical plate. Tethers cell surface-localized furin, modulates its rate of internalization and directs its intracellular trafficking. Involved in ciliogenesis. Plays a role in cell-cell contacts and adherens junctions during the development of blood vessels, heart and brain organs. Plays a role in platelets morphology through interaction with SYK that regulates ITAM- and ITAM-like-containing receptor signaling, resulting in by platelet cytoskeleton organization maintenance. During the axon guidance process, required for growth cone collapse induced by SEMA3A-mediated stimulation of neurons. The sequence is that of Filamin-A (Flna) from Mus musculus (Mouse).